Consider the following 301-residue polypeptide: uncharacterized protein (301 aa).

It belongs to the asfivirus E301R family. Interacts with host IRF3.

In terms of biological role, plays a role in the inhibition of host innate immune system by acting as a negatively regulator of type I interferon production. Mechanistically, interacts with and prevents host IRF3 nuclear localization to inhibit its transcriptional activity. This is an uncharacterized protein from African swine fever virus (isolate Pig/Kenya/KEN-50/1950) (ASFV).